The sequence spans 330 residues: Type I restriction enzyme MpnII specificity subunit (330 aa).

Belongs to the type-I restriction system S methylase family. In terms of assembly, the methyltransferase is composed of M and S polypeptides.

In terms of biological role, the specificity (S) subunit of a type I restriction enzyme; this subunit dictates DNA sequence specificity. The M and S subunits together form a methyltransferase (MTase) that probably methylates A-2 on the top strand and A-3 on the bottom strand of the sequence 5'-GAN(7)TAY-3'. As the bacterial DNA is methylated on this sequence and this is the only type I methylase in the genome, it is probably responsible for all of the methylation on this site in the genome. The R subunit has multiple frameshifts and is probably not expressed in this bacteria. This chain is Type I restriction enzyme MpnII specificity subunit, found in Mycoplasma pneumoniae (strain ATCC 29342 / M129 / Subtype 1) (Mycoplasmoides pneumoniae).